The following is a 359-amino-acid chain: Peptide chain release factor 1 (359 aa).

At Gln-236 the chain carries N5-methylglutamine.

Belongs to the prokaryotic/mitochondrial release factor family. Post-translationally, methylated by PrmC. Methylation increases the termination efficiency of RF1.

The protein localises to the cytoplasm. In terms of biological role, peptide chain release factor 1 directs the termination of translation in response to the peptide chain termination codons UAG and UAA. In Streptococcus agalactiae serotype Ia (strain ATCC 27591 / A909 / CDC SS700), this protein is Peptide chain release factor 1.